A 238-amino-acid polypeptide reads, in one-letter code: Ribonuclease Rh (238 aa).

Positions 1 to 16 (MKAVLALATLIGSTLA) are cleaved as a signal peptide. 5 cysteine pairs are disulfide-bonded: Cys19-Cys36, Cys26-Cys69, Cys35-Cys136, Cys79-Cys128, and Cys198-Cys229. Catalysis depends on residues His62, Glu121, and His125.

Belongs to the RNase T2 family.

The enzyme catalyses a ribonucleotidyl-ribonucleotide-RNA + H2O = a 3'-end 3'-phospho-ribonucleotide-RNA + a 5'-end dephospho-ribonucleoside-RNA + H(+). In terms of biological role, this is a base non-specific ribonuclease. The polypeptide is Ribonuclease Rh (Rhizopus niveus).